Here is a 471-residue protein sequence, read N- to C-terminus: Glutamate--tRNA ligase 2 (471 aa).

A 'HIGH' region motif is present at residues Pro-15–Gly-25. The short motif at Lys-243 to Arg-247 is the 'KMSKS' region element. Residue Lys-246 participates in ATP binding.

This sequence belongs to the class-I aminoacyl-tRNA synthetase family. Glutamate--tRNA ligase type 1 subfamily. In terms of assembly, monomer.

It localises to the cytoplasm. It carries out the reaction tRNA(Glu) + L-glutamate + ATP = L-glutamyl-tRNA(Glu) + AMP + diphosphate. Functionally, catalyzes the attachment of glutamate to tRNA(Glu) in a two-step reaction: glutamate is first activated by ATP to form Glu-AMP and then transferred to the acceptor end of tRNA(Glu). This is Glutamate--tRNA ligase 2 from Cereibacter sphaeroides (strain ATCC 17025 / ATH 2.4.3) (Rhodobacter sphaeroides).